We begin with the raw amino-acid sequence, 318 residues long: Acetyl-coenzyme A carboxylase carboxyl transferase subunit alpha (318 aa).

One can recognise a CoA carboxyltransferase C-terminal domain in the interval 32 to 293 (NINEEIQRLE…REALREEWAR (262 aa)).

It belongs to the AccA family. In terms of assembly, acetyl-CoA carboxylase is a heterohexamer composed of biotin carboxyl carrier protein (AccB), biotin carboxylase (AccC) and two subunits each of ACCase subunit alpha (AccA) and ACCase subunit beta (AccD).

The protein localises to the cytoplasm. It carries out the reaction N(6)-carboxybiotinyl-L-lysyl-[protein] + acetyl-CoA = N(6)-biotinyl-L-lysyl-[protein] + malonyl-CoA. The protein operates within lipid metabolism; malonyl-CoA biosynthesis; malonyl-CoA from acetyl-CoA: step 1/1. Component of the acetyl coenzyme A carboxylase (ACC) complex. First, biotin carboxylase catalyzes the carboxylation of biotin on its carrier protein (BCCP) and then the CO(2) group is transferred by the carboxyltransferase to acetyl-CoA to form malonyl-CoA. The polypeptide is Acetyl-coenzyme A carboxylase carboxyl transferase subunit alpha (Halorhodospira halophila (strain DSM 244 / SL1) (Ectothiorhodospira halophila (strain DSM 244 / SL1))).